The sequence spans 76 residues: Small ribosomal subunit protein bS18 (76 aa).

Belongs to the bacterial ribosomal protein bS18 family. As to quaternary structure, part of the 30S ribosomal subunit. Forms a tight heterodimer with protein bS6.

Functionally, binds as a heterodimer with protein bS6 to the central domain of the 16S rRNA, where it helps stabilize the platform of the 30S subunit. This Xylella fastidiosa (strain 9a5c) protein is Small ribosomal subunit protein bS18.